We begin with the raw amino-acid sequence, 647 residues long: Indolepyruvate oxidoreductase subunit IorA (647 aa).

4Fe-4S ferredoxin-type domains follow at residues 585–614 and 616–645; these read PIYH…WDPE and KKAK…PMKE. [4Fe-4S] cluster contacts are provided by Cys-594, Cys-597, Cys-600, Cys-606, Cys-625, Cys-628, Cys-631, and Cys-635.

Heterodimer of the IorA and IorB subunits. [4Fe-4S] cluster is required as a cofactor.

It catalyses the reaction indole-3-pyruvate + 2 oxidized [2Fe-2S]-[ferredoxin] + CoA = (indol-3-yl)acetyl-CoA + 2 reduced [2Fe-2S]-[ferredoxin] + CO2 + H(+). Catalyzes the ferredoxin-dependent oxidative decarboxylation of arylpyruvates. The chain is Indolepyruvate oxidoreductase subunit IorA (iorA) from Thermococcus kodakarensis (strain ATCC BAA-918 / JCM 12380 / KOD1) (Pyrococcus kodakaraensis (strain KOD1)).